Consider the following 208-residue polypeptide: Large ribosomal subunit protein uL3 (208 aa).

Residues 123–147 (RHGQSRGPMAHGSRYHRRPGSMGPV) are disordered.

It belongs to the universal ribosomal protein uL3 family. Part of the 50S ribosomal subunit. Forms a cluster with proteins L14 and L19.

Its function is as follows. One of the primary rRNA binding proteins, it binds directly near the 3'-end of the 23S rRNA, where it nucleates assembly of the 50S subunit. In Streptococcus uberis (strain ATCC BAA-854 / 0140J), this protein is Large ribosomal subunit protein uL3.